The following is a 418-amino-acid chain: MALVLHAGSGNKNAFKALIAAEYSGVKVELVKNFQMGVSNKTPEFLKMNPIGKIPVLETPDGPVFESNAIARYVTRSKADNPLYGSSLIEYAHIEQWNDFSATEVDANIGKWLYPRLGIAPYVAVSEEAAIAALKRSLGALNTHLASNTYLVGHSVTLADIVMTCNLYMGFARIMTKSFTSEFPHVERYFWTMVNQPNFKKVLGDVKQAESVPPVQKKAPPPKEQKPKEAKKEAPKEAPKPKAVEKPEEEEEAPKPKPKNPLDLLPPSKMILDEWKRLYSNTKTNFREVAIKGFWDMYDPEGYSLWFCDYKYNDENTVSFVTMNKVGGFLQRMDLCRKYAFGKMLVIGSEPPFKVKGLWLFRGPEIPKFVMDEVYDMELYEWTKVDISDEAQKERVSAMIEDLEPFEGESLLDAKCFK.

In terms of domain architecture, GST N-terminal spans 1–82 (MALVLHAGSG…YVTRSKADNP (82 aa)). In terms of domain architecture, GST C-terminal spans 87–215 (SLIEYAHIEQ…VKQAESVPPV (129 aa)). The disordered stretch occupies residues 210–265 (ESVPPVQKKAPPPKEQKPKEAKKEAPKEAPKPKAVEKPEEEEEAPKPKPKNPLDLL). Over residues 221 to 246 (PPKEQKPKEAKKEAPKEAPKPKAVEK) the composition is skewed to basic and acidic residues. One can recognise an EF-1-gamma C-terminal domain in the interval 258-418 (PKNPLDLLPP…ESLLDAKCFK (161 aa)).

As to quaternary structure, EF-1 is composed of four subunits: alpha, beta, delta, and gamma.

Probably plays a role in anchoring the complex to other cellular components. The protein is Elongation factor 1-gamma 2 of Oryza sativa subsp. japonica (Rice).